The sequence spans 85 residues: U4-theraphotoxin-Hhn1d (85 aa).

The N-terminal stretch at 1–22 (MKVTLIAILTCAAVLVLHTTAA) is a signal peptide. A propeptide spanning residues 23-48 (EELEAESQLMEVGMPDTELAAVDEER) is cleaved from the precursor. 3 disulfide bridges follow: Cys52/Cys66, Cys56/Cys77, and Cys71/Cys82.

It belongs to the neurotoxin 12 (Hwtx-2) family. 02 (Hwtx-2) subfamily. Expressed by the venom gland.

Its subcellular location is the secreted. Postsynaptic neurotoxin. The chain is U4-theraphotoxin-Hhn1d from Cyriopagopus hainanus (Chinese bird spider).